Reading from the N-terminus, the 363-residue chain is Transcription factor IIIA (363 aa).

9 consecutive C2H2-type zinc fingers follow at residues 38–62 (FICS…LCKH), 68–92 (FVCD…ILIH), 98–123 (FVCA…ERKH), 130–154 (YVCN…QCQH), 160–184 (FRCT…GKVH), 187–211 (YLCQ…REAH), 215–237 (VTCT…MKTH), 244–269 (YRCP…LSFH), and 275–299 (FVCE…SVVH). A disordered region spans residues 301 to 363 (PDKKRMKLKV…LAPAALLTVH (63 aa)). The span at 338–350 (SLPNSTESSSSPE) shows a compositional bias: low complexity.

Its subcellular location is the nucleus. Its function is as follows. Involved in ribosomal large subunit biogenesis. Binds the approximately 50 base pairs internal control region (ICR) of 5S ribosomal RNA genes. It is required for their RNA polymerase III-dependent transcription and may also maintain the transcription of other genes. Also binds the transcribed 5S RNA's. The protein is Transcription factor IIIA (Gtf3a) of Rattus norvegicus (Rat).